The chain runs to 353 residues: 3-dehydroquinate synthase (353 aa).

Belongs to the archaeal-type DHQ synthase family.

It carries out the reaction 2-amino-2,3,7-trideoxy-D-lyxo-hept-6-ulosonate + NAD(+) + H2O = 3-dehydroquinate + NH4(+) + NADH + H(+). Catalyzes the oxidative deamination and cyclization of 2-amino-3,7-dideoxy-D-threo-hept-6-ulosonic acid (ADH) to yield 3-dehydroquinate (DHQ), which is fed into the canonical shikimic pathway of aromatic amino acid biosynthesis. This is 3-dehydroquinate synthase from Nitrosopumilus maritimus (strain SCM1).